Reading from the N-terminus, the 301-residue chain is GTPase Era (301 aa).

An Era-type G domain is found at 7 to 175 (YCGFIAIVGR…AGIVRKHLPE (169 aa)). The interval 15 to 22 (GRPNVGKS) is G1. Residue 15–22 (GRPNVGKS) coordinates GTP. A G2 region spans residues 41-45 (QTTRH). Positions 62–65 (DTPG) are G3. Residues 62–66 (DTPGL) and 124–127 (NKVD) each bind GTP. Residues 124 to 127 (NKVD) are G4. The interval 154 to 156 (LSA) is G5. One can recognise a KH type-2 domain in the interval 198–283 (IREKLMRFLG…HLELWVKVKS (86 aa)).

It belongs to the TRAFAC class TrmE-Era-EngA-EngB-Septin-like GTPase superfamily. Era GTPase family. In terms of assembly, monomer.

It localises to the cytoplasm. The protein resides in the cell inner membrane. An essential GTPase that binds both GDP and GTP, with rapid nucleotide exchange. Plays a role in 16S rRNA processing and 30S ribosomal subunit biogenesis and possibly also in cell cycle regulation and energy metabolism. In Enterobacter sp. (strain 638), this protein is GTPase Era.